Reading from the N-terminus, the 403-residue chain is Phosphoglycerate kinase (403 aa).

Residues 21 to 23 (DFN), Arg-36, 59 to 62 (HLGR), Arg-119, and Arg-154 contribute to the substrate site. Residues Lys-207, Gly-299, Glu-330, and 357-360 (GGDA) each bind ATP.

The protein belongs to the phosphoglycerate kinase family. Monomer.

The protein resides in the cytoplasm. The catalysed reaction is (2R)-3-phosphoglycerate + ATP = (2R)-3-phospho-glyceroyl phosphate + ADP. Its pathway is carbohydrate degradation; glycolysis; pyruvate from D-glyceraldehyde 3-phosphate: step 2/5. The protein is Phosphoglycerate kinase of Chlamydia abortus (strain DSM 27085 / S26/3) (Chlamydophila abortus).